Reading from the N-terminus, the 479-residue chain is Sulfate adenylyltransferase subunit 1 (479 aa).

Residues 25–239 (KSLLRFLTCG…EVLETVDIQR (215 aa)) enclose the tr-type G domain. The G1 stretch occupies residues 34 to 41 (GSVDDGKS). 34–41 (GSVDDGKS) provides a ligand contact to GTP. Positions 92–96 (GITID) are G2. The tract at residues 113-116 (DTPG) is G3. GTP contacts are provided by residues 113 to 117 (DTPGH) and 168 to 171 (NKMD). Positions 168–171 (NKMD) are G4. Positions 206-208 (SAL) are G5.

This sequence belongs to the TRAFAC class translation factor GTPase superfamily. Classic translation factor GTPase family. CysN/NodQ subfamily. Heterodimer composed of CysD, the smaller subunit, and CysN.

The enzyme catalyses sulfate + ATP + H(+) = adenosine 5'-phosphosulfate + diphosphate. It participates in sulfur metabolism; hydrogen sulfide biosynthesis; sulfite from sulfate: step 1/3. Its function is as follows. With CysD forms the ATP sulfurylase (ATPS) that catalyzes the adenylation of sulfate producing adenosine 5'-phosphosulfate (APS) and diphosphate, the first enzymatic step in sulfur assimilation pathway. APS synthesis involves the formation of a high-energy phosphoric-sulfuric acid anhydride bond driven by GTP hydrolysis by CysN coupled to ATP hydrolysis by CysD. This is Sulfate adenylyltransferase subunit 1 from Salmonella arizonae (strain ATCC BAA-731 / CDC346-86 / RSK2980).